Consider the following 450-residue polypeptide: Phosphoglucosamine mutase (450 aa).

Residue serine 101 is the Phosphoserine intermediate of the active site. Mg(2+) is bound by residues serine 101, aspartate 240, aspartate 242, and aspartate 244. Serine 101 bears the Phosphoserine mark.

Belongs to the phosphohexose mutase family. Mg(2+) is required as a cofactor. In terms of processing, activated by phosphorylation.

It carries out the reaction alpha-D-glucosamine 1-phosphate = D-glucosamine 6-phosphate. Functionally, catalyzes the conversion of glucosamine-6-phosphate to glucosamine-1-phosphate. This is Phosphoglucosamine mutase from Streptococcus pneumoniae (strain Hungary19A-6).